We begin with the raw amino-acid sequence, 132 residues long: MASASAQSAALSAEQAKVVLAEVIQAFSAPENAVRMDEARDNACNDMGKMLQFVLPVATQIQQEVIKAYGFSCDGEGVLKFARLVKSYEAQDPEIASLSGKLKALFLPPMTLPPHGPASGGSVAASLGLALP.

N-acetylalanine is present on Ala2.

It belongs to the UPF0456 family.

The protein resides in the cytoplasm. Its function is as follows. In brain, may be required for corpus callosum development. The protein is Protein C10 of Bos taurus (Bovine).